The sequence spans 447 residues: Tubulin beta-1 chain (447 aa).

Residue Q11 participates in GTP binding. Position 40 is a phosphoserine (S40). Residues E69, S138, G142, T143, G144, N204, and N226 each contribute to the GTP site. E69 serves as a coordination point for Mg(2+). S339 is modified (phosphoserine). A disordered region spans residues 427–447 (EATADEDAEFEEEQEAEVDEN). Residues 429–447 (TADEDAEFEEEQEAEVDEN) show a composition bias toward acidic residues.

This sequence belongs to the tubulin family. As to quaternary structure, dimer of alpha and beta chains. A typical microtubule is a hollow water-filled tube with an outer diameter of 25 nm and an inner diameter of 15 nM. Alpha-beta heterodimers associate head-to-tail to form protofilaments running lengthwise along the microtubule wall with the beta-tubulin subunit facing the microtubule plus end conferring a structural polarity. Microtubules usually have 13 protofilaments but different protofilament numbers can be found in some organisms and specialized cells. Interacts with mgr and Vhl. Mg(2+) is required as a cofactor.

Its subcellular location is the cytoplasm. It localises to the cytoskeleton. In terms of biological role, tubulin is the major constituent of microtubules, a cylinder consisting of laterally associated linear protofilaments composed of alpha- and beta-tubulin heterodimers. Microtubules grow by the addition of GTP-tubulin dimers to the microtubule end, where a stabilizing cap forms. Below the cap, tubulin dimers are in GDP-bound state, owing to GTPase activity of alpha-tubulin. This Drosophila melanogaster (Fruit fly) protein is Tubulin beta-1 chain (betaTub56D).